We begin with the raw amino-acid sequence, 343 residues long: Endoglucanase C (343 aa).

E140 acts as the Proton donor in catalysis. E280 (nucleophile) is an active-site residue.

Belongs to the glycosyl hydrolase 5 (cellulase A) family.

The catalysed reaction is Endohydrolysis of (1-&gt;4)-beta-D-glucosidic linkages in cellulose, lichenin and cereal beta-D-glucans.. The protein operates within glycan metabolism; cellulose degradation. This enzyme catalyzes the endohydrolysis of 1,4-beta-glucosidic linkages in cellulose, lichenin and cereal beta-D-glucans. The protein is Endoglucanase C (celC) of Acetivibrio thermocellus (Hungateiclostridium thermocellum).